Here is a 685-residue protein sequence, read N- to C-terminus: Probable glucan endo-1,3-beta-glucosidase btgC (685 aa).

3 disordered regions span residues 1–96, 119–168, and 180–202; these read MSGP…NLGP, GIDA…RDSY, and PAGQLTPGGSNPSQRSLFDSPYQ. At 1-312 the chain is on the cytoplasmic side; that stretch reads MSGPHRSFSF…PTPGGGSRKR (312 aa). Composition is skewed to polar residues over residues 47-61 and 73-90; these read SARSQAMGSSPSSGF and GQNSGHTQAMRTNSTTPG. A helical; Signal-anchor for type II membrane protein transmembrane segment spans residues 313 to 333; the sequence is GWIVGLALAFIVVGAIVGGAV. Residues 334–685 lie on the Extracellular side of the membrane; the sequence is GGTLGNRENE…IPDCGGKTAA (352 aa). Positions 335-369 are disordered; the sequence is GTLGNRENEAPDTTKSASSDTESNGDLNKDSSEIK. Residues 345–360 are compositionally biased toward polar residues; that stretch reads PDTTKSASSDTESNGD. N-linked (GlcNAc...) asparagine glycans are attached at residues Asn-405, Asn-428, and Asn-456. The active-site Proton donor is the Glu-488. Glu-587 acts as the Nucleophile in catalysis. An N-linked (GlcNAc...) asparagine glycan is attached at Asn-632.

Belongs to the glycosyl hydrolase 17 family.

It is found in the cell membrane. It carries out the reaction Hydrolysis of (1-&gt;3)-beta-D-glucosidic linkages in (1-&gt;3)-beta-D-glucans.. Functionally, glucanases play a role in cell expansion during growth, in cell-cell fusion during mating, and in spore release during sporulation. This enzyme may be involved in beta-glucan degradation. Active on laminarin and lichenan. This chain is Probable glucan endo-1,3-beta-glucosidase btgC (btgC), found in Aspergillus oryzae (strain ATCC 42149 / RIB 40) (Yellow koji mold).